A 168-amino-acid chain; its full sequence is Monothiol glutaredoxin-S7, chloroplastic (168 aa).

A chloroplast-targeting transit peptide spans 1–54 (MAATAAASVAAISPLPGASLPRPVSARVPLLPRASPPTWRLSVGSARARSTRCL). The region spanning 67 to 168 (RATLDKVVGS…QETLEKAMLS (102 aa)) is the Glutaredoxin domain. A glutathione-binding site is contributed by Lys84. Cys92 contributes to the [2Fe-2S] cluster binding site. Glutathione contacts are provided by residues Arg121, Phe133, and 146-147 (CD).

Belongs to the glutaredoxin family. CGFS subfamily.

It is found in the plastid. The protein resides in the chloroplast. Functionally, may only reduce GSH-thiol disulfides, but not protein disulfides. The sequence is that of Monothiol glutaredoxin-S7, chloroplastic (GRXS7) from Oryza sativa subsp. japonica (Rice).